The following is a 734-amino-acid chain: Photosystem I P700 chlorophyll a apoprotein A2 (734 aa).

A run of 8 helical transmembrane segments spans residues 46–69 (IFAS…FHVA), 135–158 (LYTG…LHLQ), 175–199 (LNHH…HVAI), 273–291 (IAHH…GHMY), 330–353 (LHFQ…QHMY), 369–395 (AALY…IFFI), 417–439 (AIIS…LYVH), and 517–535 (FLVH…LILV). The [4Fe-4S] cluster site is built by Cys-559 and Cys-568. A run of 2 helical transmembrane segments spans residues 575 to 596 (AFYL…YWHW) and 643 to 665 (LSVW…MFLI). Residues His-654, Met-662, and Tyr-670 each contribute to the chlorophyll a site. Trp-671 lines the phylloquinone pocket. The helical transmembrane segment at 707-727 (LVGLAHFSVGYIFTYAAFLIA) threads the bilayer.

This sequence belongs to the PsaA/PsaB family. The PsaA/B heterodimer binds the P700 chlorophyll special pair and subsequent electron acceptors. PSI consists of a core antenna complex that captures photons, and an electron transfer chain that converts photonic excitation into a charge separation. The eukaryotic PSI reaction center is composed of at least 11 subunits. The cofactor is P700 is a chlorophyll a/chlorophyll a' dimer, A0 is one or more chlorophyll a, A1 is one or both phylloquinones and FX is a shared 4Fe-4S iron-sulfur center..

The protein localises to the plastid. The protein resides in the chloroplast thylakoid membrane. It carries out the reaction reduced [plastocyanin] + hnu + oxidized [2Fe-2S]-[ferredoxin] = oxidized [plastocyanin] + reduced [2Fe-2S]-[ferredoxin]. Its function is as follows. PsaA and PsaB bind P700, the primary electron donor of photosystem I (PSI), as well as the electron acceptors A0, A1 and FX. PSI is a plastocyanin-ferredoxin oxidoreductase, converting photonic excitation into a charge separation, which transfers an electron from the donor P700 chlorophyll pair to the spectroscopically characterized acceptors A0, A1, FX, FA and FB in turn. Oxidized P700 is reduced on the lumenal side of the thylakoid membrane by plastocyanin. In Zygnema circumcarinatum (Green alga), this protein is Photosystem I P700 chlorophyll a apoprotein A2.